Here is a 390-residue protein sequence, read N- to C-terminus: Na(+)/H(+) antiporter NhaA (390 aa).

12 helical membrane-spanning segments follow: residues 14-34, 61-81, 97-117, 126-146, 156-176, 181-201, 221-241, 256-276, 280-300, 305-325, 330-350, and 362-382; these read AAGGIVLIAAAALAMLLANLN, MLLWVNDALMAVFFLLVGLEV, SLPVIAALGGMVLPAALYLAF, AGWAIPAATDIAFALGILALL, VFLMALAIIDDLGAIVIIALF, LSMVSLMVAAGAIAVLAVLNL, VLKSGVHATLAGVIIGFFVPL, ALHPWVGFLILPLFAFANAGV, GVTLAGLASLLPLGIIAGLFI, GISLFCALAVKLKWATLPPGV, ILAVGVLCGIGFTMSIFIASL, and WAKLGILVGSLLAAVIGYALL.

Belongs to the NhaA Na(+)/H(+) (TC 2.A.33) antiporter family.

It localises to the cell inner membrane. It carries out the reaction Na(+)(in) + 2 H(+)(out) = Na(+)(out) + 2 H(+)(in). Functionally, na(+)/H(+) antiporter that extrudes sodium in exchange for external protons. In Cronobacter sakazakii (strain ATCC BAA-894) (Enterobacter sakazakii), this protein is Na(+)/H(+) antiporter NhaA.